The primary structure comprises 321 residues: tRNA uridine(34) hydroxylase (321 aa).

One can recognise a Rhodanese domain in the interval 135 to 233 (DDPDTLVIDT…YLEQVPEEES (99 aa)). C193 functions as the Cysteine persulfide intermediate in the catalytic mechanism. Residues 301 to 321 (RQRQMDQLSSASSKKSDDFSL) form a disordered region.

The protein belongs to the TrhO family.

The catalysed reaction is uridine(34) in tRNA + AH2 + O2 = 5-hydroxyuridine(34) in tRNA + A + H2O. Its function is as follows. Catalyzes oxygen-dependent 5-hydroxyuridine (ho5U) modification at position 34 in tRNAs. The polypeptide is tRNA uridine(34) hydroxylase (Parasynechococcus marenigrum (strain WH8102)).